The primary structure comprises 732 residues: Ferric aerobactin receptor (732 aa).

The first 25 residues, 1–25, serve as a signal peptide directing secretion; that stretch reads MMISKKYTLWALNPLLLTMMAPAVA. The TonB box signature appears at 31-38; that stretch reads ETFVVSAN. The region spanning 43 to 153 is the TBDR plug domain; it reads TVAEMAQTTW…TGGLINIVTK (111 aa). Residues 158–732 enclose the TBDR beta-barrel domain; sequence ETMMEFEAGT…TFGLNYSVLF (575 aa). Residues 715–732 carry the TonB C-terminal box motif; it reads YDYKGRGRTFGLNYSVLF.

This sequence belongs to the TonB-dependent receptor family.

The protein localises to the cell outer membrane. Its function is as follows. Receptor for cloacin DF13/aerobactin. This chain is Ferric aerobactin receptor (iutA), found in Escherichia coli.